A 555-amino-acid chain; its full sequence is Formate--tetrahydrofolate ligase (555 aa).

65–72 (TPAGEGKT) is a binding site for ATP.

The protein belongs to the formate--tetrahydrofolate ligase family.

It catalyses the reaction (6S)-5,6,7,8-tetrahydrofolate + formate + ATP = (6R)-10-formyltetrahydrofolate + ADP + phosphate. It participates in one-carbon metabolism; tetrahydrofolate interconversion. The chain is Formate--tetrahydrofolate ligase from Thermoanaerobacter sp. (strain X514).